We begin with the raw amino-acid sequence, 960 residues long: Probable RNA-binding protein 19 (960 aa).

Positions 2–79 constitute an RRM 1 domain; that stretch reads SRLIVKNLPN…SRITVEFCKS (78 aa). Disordered stretches follow at residues 85–119 and 149–294; these read KPRA…KKKK and WAND…TTCH. 3 positions are modified to phosphoserine: Ser174, Ser176, and Ser180. Acidic residues predominate over residues 176–194; sequence SGQESEEEGAGEDLEEEAS. A compositionally biased stretch (basic and acidic residues) spans 273-286; it reads RPPEARAETEKPAN. RRM domains lie at 294-369 and 402-480; these read HTVK…REKN and GRLF…PSTI. A Glycyl lysine isopeptide (Lys-Gly) (interchain with G-Cter in SUMO2) cross-link involves residue Lys481. The disordered stretch occupies residues 491-513; the sequence is LGSSSYKKKKEAQDKANSASSHN. One can recognise an RRM 4 domain in the interval 587 to 659; sequence TVILVKNLPA…VPLYLEWAPV (73 aa). Positions 667 to 729 are disordered; it reads PQKKKLQDTP…EEEEEESLPG (63 aa). 2 stretches are compositionally biased toward acidic residues: residues 689 to 706 and 714 to 726; these read TVPD…EEGA and EEEE…EEES. RRM domains follow at residues 730-811 and 832-912; these read CTLF…ISER and SKIL…WADS. A phosphoserine mark is found at Ser936, Ser949, and Ser951.

Belongs to the RRM MRD1 family. Expressed in the crypts of Lieberkuhn of the intestine and in intestinal neoplasia (at protein level).

It localises to the nucleus. The protein resides in the nucleolus. Its subcellular location is the nucleoplasm. It is found in the cytoplasm. The protein localises to the chromosome. Functionally, plays a role in embryo pre-implantation development. This Homo sapiens (Human) protein is Probable RNA-binding protein 19 (RBM19).